We begin with the raw amino-acid sequence, 171 residues long: Lipoprotein signal peptidase (171 aa).

Transmembrane regions (helical) follow at residues 15–35 (WLWLALLVFIADITIKLIVMD), 47–67 (VLPFFNLLYVHNYGAAFSFLS), 72–92 (WQRWLFTGIAFVVTGMLAYWM), and 107–127 (ALIIGGAVGNVFDRIVHGFVV). Catalysis depends on residues Asp128 and Asp146. A helical membrane pass occupies residues 141-161 (AFNLADSTICIGAAMIILDGF).

This sequence belongs to the peptidase A8 family.

The protein resides in the cell inner membrane. The catalysed reaction is Release of signal peptides from bacterial membrane prolipoproteins. Hydrolyzes -Xaa-Yaa-Zaa-|-(S,diacylglyceryl)Cys-, in which Xaa is hydrophobic (preferably Leu), and Yaa (Ala or Ser) and Zaa (Gly or Ala) have small, neutral side chains.. It functions in the pathway protein modification; lipoprotein biosynthesis (signal peptide cleavage). This protein specifically catalyzes the removal of signal peptides from prolipoproteins. The sequence is that of Lipoprotein signal peptidase from Vibrio cholerae serotype O1 (strain ATCC 39541 / Classical Ogawa 395 / O395).